Consider the following 148-residue polypeptide: Large ribosomal subunit protein uL15A (148 aa).

2 stretches are compositionally biased toward basic residues: residues 1–13 (MPTHVSKTRKLRG) and 21–31 (RIGKHRKHPGG). The segment at 1-36 (MPTHVSKTRKLRGHVSAGHGRIGKHRKHPGGRGKAG) is disordered.

It belongs to the universal ribosomal protein uL15 family. In terms of assembly, component of the large ribosomal subunit (LSU). Mature yeast ribosomes consist of a small (40S) and a large (60S) subunit. The 40S small subunit contains 1 molecule of ribosomal RNA (18S rRNA) and at least 33 different proteins. The large 60S subunit contains 3 rRNA molecules (25S, 5.8S and 5S rRNA) and at least 46 different proteins.

The protein localises to the cytoplasm. Component of the ribosome, a large ribonucleoprotein complex responsible for the synthesis of proteins in the cell. The small ribosomal subunit (SSU) binds messenger RNAs (mRNAs) and translates the encoded message by selecting cognate aminoacyl-transfer RNA (tRNA) molecules. The large subunit (LSU) contains the ribosomal catalytic site termed the peptidyl transferase center (PTC), which catalyzes the formation of peptide bonds, thereby polymerizing the amino acids delivered by tRNAs into a polypeptide chain. The nascent polypeptides leave the ribosome through a tunnel in the LSU and interact with protein factors that function in enzymatic processing, targeting, and the membrane insertion of nascent chains at the exit of the ribosomal tunnel. The chain is Large ribosomal subunit protein uL15A (rpl2802) from Schizosaccharomyces pombe (strain 972 / ATCC 24843) (Fission yeast).